The primary structure comprises 573 residues: Phosphoenolpyruvate-protein phosphotransferase (573 aa).

The active-site Tele-phosphohistidine intermediate is His190. Arg297 and Arg333 together coordinate substrate. Residues Glu432 and Asp456 each coordinate Mg(2+). A phosphoenolpyruvate-binding site is contributed by 455 to 456 (ND). Position 466 (Arg466) interacts with substrate. Catalysis depends on Cys503, which acts as the Proton donor.

Belongs to the PEP-utilizing enzyme family. In terms of assembly, homodimer. Requires Mg(2+) as cofactor.

The protein resides in the cytoplasm. The catalysed reaction is L-histidyl-[protein] + phosphoenolpyruvate = N(pros)-phospho-L-histidyl-[protein] + pyruvate. In terms of biological role, general (non sugar-specific) component of the phosphoenolpyruvate-dependent sugar phosphotransferase system (sugar PTS). This major carbohydrate active-transport system catalyzes the phosphorylation of incoming sugar substrates concomitantly with their translocation across the cell membrane. Enzyme I transfers the phosphoryl group from phosphoenolpyruvate (PEP) to the phosphoryl carrier protein (HPr). In Staphylococcus carnosus (strain TM300), this protein is Phosphoenolpyruvate-protein phosphotransferase (ptsI).